The primary structure comprises 232 residues: Putative homeobox protein NANOG2 (232 aa).

The disordered stretch occupies residues 1–39; it reads MDLPIQDSHDSSTSPKGKQPTTAEKSATKKEDKVPVKKQ. Residues 11–25 are compositionally biased toward polar residues; the sequence is SSTSPKGKQPTTAEK. Residues 26–35 show a composition bias toward basic and acidic residues; that stretch reads SATKKEDKVP. Repeat copies occupy residues 123-127, 128-132, 133-137, 143-147, 148-152, 153-157, 158-162, and 163-167. The segment at 123–167 is 8 X repeats starting with a Trp in each unit; the sequence is WSNQTWNNSTWSNQTQNIQSWSNHSWNTQTWCTQSWNNQAWNSPF. A sufficient for transactivation activity region spans residues 123–167; the sequence is WSNQTWNNSTWSNQTQNIQSWSNHSWNTQTWCTQSWNNQAWNSPF. The sufficient for strong transactivation activity stretch occupies residues 168 to 232; it reads YNCGEESLQS…YSTNMXXEDV (65 aa).

Belongs to the Nanog homeobox family.

It localises to the nucleus. In terms of biological role, probable transcriptional regulator. The chain is Putative homeobox protein NANOG2 (NANOGP1) from Pan paniscus (Pygmy chimpanzee).